The primary structure comprises 417 residues: Gamma-glutamyl phosphate reductase (417 aa).

It belongs to the gamma-glutamyl phosphate reductase family.

The protein resides in the cytoplasm. It catalyses the reaction L-glutamate 5-semialdehyde + phosphate + NADP(+) = L-glutamyl 5-phosphate + NADPH + H(+). It functions in the pathway amino-acid biosynthesis; L-proline biosynthesis; L-glutamate 5-semialdehyde from L-glutamate: step 2/2. Catalyzes the NADPH-dependent reduction of L-glutamate 5-phosphate into L-glutamate 5-semialdehyde and phosphate. The product spontaneously undergoes cyclization to form 1-pyrroline-5-carboxylate. This is Gamma-glutamyl phosphate reductase from Serratia proteamaculans (strain 568).